A 1007-amino-acid chain; its full sequence is Kinesin-like protein KIN-7D, chloroplastic (1007 aa).

The transit peptide at 1-53 directs the protein to the chloroplast; the sequence is MATRPASRQRRASSAAAAVAVVRSSPQPQQQQQQQLPIPQSGSPTSTTTTTTS. The segment covering 1–55 has biased composition (low complexity); it reads MATRPASRQRRASSAAAAVAVVRSSPQPQQQQQQQLPIPQSGSPTSTTTTTTSSS. The interval 1–79 is disordered; the sequence is MATRPASRQR…LFAGLDEDPA (79 aa). The region spanning 83–402 is the Kinesin motor domain; the sequence is NVTVTVRFRP…LKFAHRAKRI (320 aa). 163-170 contacts ATP; sequence GVTSSGKT. Residues 403-495 adopt a coiled-coil conformation; sequence EVQASQNKII…QRLTKLILVS (93 aa). Positions 579–607 are disordered; that stretch reads ILTSSEGDKSSLTKSTAPSTPIGESVNFP. Coiled coils occupy residues 687-716, 754-791, and 836-907; these read NNEK…ERQI, AADN…TLQA, and SVEI…SVRS. Positions 901–941 are disordered; sequence ELASVRSPTPRRANSGLRGTRRDSISRRHEPAPRRDNNAGY. Positions 920–941 are enriched in basic and acidic residues; that stretch reads TRRDSISRRHEPAPRRDNNAGY. Residues 942–982 are a coiled coil; the sequence is EREKALEAVLMEKEQKEAELQRRIEESKQKEAFLESELANM.

The protein belongs to the TRAFAC class myosin-kinesin ATPase superfamily. Kinesin family. KIN-7 subfamily. In terms of assembly, binds microtubules. Homodimer. Requires Mg(2+) as cofactor.

The protein localises to the plastid. It is found in the chloroplast. Functionally, probable minus end-directed motor protein with a microtubule-enhanced ATPase activity. Binds ATP/ADP in vitro. Retains total enzymatic activity even after the removal of the ADP bound in the active site. In Oryza sativa subsp. japonica (Rice), this protein is Kinesin-like protein KIN-7D, chloroplastic.